A 208-amino-acid chain; its full sequence is Small ribosomal subunit protein uS4 (208 aa).

One can recognise an S4 RNA-binding domain in the interval 95 to 161 (MRLDALVLRA…VPLQVAAAGA (67 aa)).

It belongs to the universal ribosomal protein uS4 family. Part of the 30S ribosomal subunit. Contacts protein S5. The interaction surface between S4 and S5 is involved in control of translational fidelity.

Functionally, one of the primary rRNA binding proteins, it binds directly to 16S rRNA where it nucleates assembly of the body of the 30S subunit. Its function is as follows. With S5 and S12 plays an important role in translational accuracy. The protein is Small ribosomal subunit protein uS4 of Pseudarthrobacter chlorophenolicus (strain ATCC 700700 / DSM 12829 / CIP 107037 / JCM 12360 / KCTC 9906 / NCIMB 13794 / A6) (Arthrobacter chlorophenolicus).